The following is an 81-amino-acid chain: Small cysteine-rich protein 1 1 (81 aa).

The N-terminal stretch at 1-19 (MGVHFNICLLLLLVATISS) is a signal peptide. A propeptide spanning residues 20–39 (QTLKATEKDDSTDENPFGIY) is cleaved from the precursor.

This sequence belongs to the Cnidaria small cysteine-rich protein (SCRiP) family. alpha subfamily. The basic myotoxic domain of rattlesnake crotamine toxins (with 6 Cys residues) has been detected in this protein. However, this protein contains 2 additional Cys at the C-terminal region. Hence, this protein may contain 4 disulfide bonds instead of the 3 suggested by the myotoxin domain.

It is found in the secreted. Its subcellular location is the nematocyst. Functionally, induces neurotoxic symptoms on zebrafish. Has also been claimed to be implied in calcification, but tests on homolog proteins suggest that proteins of this family have a neurotoxic function and not a calcification function. This Montipora capitata (Rice coral) protein is Small cysteine-rich protein 1 1.